The primary structure comprises 574 residues: MSDKPLTDVTFSSFDLHPALVAGLESAGFTRCTPIQALTLPVALPGGDVAGQAQTGTGKTLAFLVAVMNRLLNRPALADRKPEDPRALILAPTRELAIQIHKDAVKFGADLGLRFALVYGGVDYDKQRELLQQGVDVIIATPGRLIDYVKQHKVVSLHACEICVLDEADRMFDLGFIKDIRFLLRRMPERGTRQTLLFSATLSHRVLELAYEHMNEPEKLVVETETITAARVRQRIYFPSDDEKQTLLLGLLSRSEGARTMVFVNTKAFVERVARTLERHGYRVGVLSGDVPQKKRESLLNRFQKGQLEILVATDVAARGLHIDGVKYVYNYDLPFDAEDYVHRIGRTARLGEEGDAISFACERYAMSLPDIEAYIEQKIPVEPVTSELLTPLPRAARVPVEGEEADDEAGDSVGTIFREAREQRAAEEQRRGGGRSGPGGGSRSGSGGGRRDGASAGADGKPRPRRKPRVEGEAPAAAAQTEKPVVAAAAAQAPSVGMADAERAPRKRRRRRNGRPVEGAEPAVASTPIAAPAAPRKPTQVVATPVRAANKSSGSPSLLGRIGRRLRSLVSGN.

The short motif at V9–A37 is the Q motif element. Residues L40–L220 form the Helicase ATP-binding domain. A53–T60 lines the ATP pocket. The short motif at D166–D169 is the DEAD box element. Positions R231–L393 constitute a Helicase C-terminal domain. Residues E423–R432 are compositionally biased toward basic and acidic residues. A disordered region spans residues E423–N574. Residues G435–G449 are compositionally biased toward gly residues. Over residues A477–P495 the composition is skewed to low complexity. Positions P506–G515 are enriched in basic residues. Composition is skewed to low complexity over residues P523–A535 and S553–R562.

Belongs to the DEAD box helicase family. RhlB subfamily. Component of the RNA degradosome, which is a multiprotein complex involved in RNA processing and mRNA degradation.

The protein localises to the cytoplasm. It carries out the reaction ATP + H2O = ADP + phosphate + H(+). Its function is as follows. DEAD-box RNA helicase involved in RNA degradation. Has RNA-dependent ATPase activity and unwinds double-stranded RNA. The chain is ATP-dependent RNA helicase RhlB from Xanthomonas oryzae pv. oryzae (strain KACC10331 / KXO85).